A 178-amino-acid chain; its full sequence is Cytochrome b6-f complex iron-sulfur subunit (178 aa).

Residues 20 to 42 (LLTFGSVTGVALGSLYPVVKYFI) traverse the membrane as a helical segment. One can recognise a Rieske domain in the interval 68–161 (WLANHSDGDR…IAVENDNVFV (94 aa)). Cys-107, His-109, Cys-125, and His-128 together coordinate [2Fe-2S] cluster. The cysteines at positions 112 and 127 are disulfide-linked.

It belongs to the Rieske iron-sulfur protein family. In terms of assembly, the 4 large subunits of the cytochrome b6-f complex are cytochrome b6, subunit IV (17 kDa polypeptide, PetD), cytochrome f and the Rieske protein, while the 4 small subunits are PetG, PetL, PetM and PetN. The complex functions as a dimer. [2Fe-2S] cluster is required as a cofactor.

Its subcellular location is the cellular thylakoid membrane. The catalysed reaction is 2 oxidized [plastocyanin] + a plastoquinol + 2 H(+)(in) = 2 reduced [plastocyanin] + a plastoquinone + 4 H(+)(out). Component of the cytochrome b6-f complex, which mediates electron transfer between photosystem II (PSII) and photosystem I (PSI), cyclic electron flow around PSI, and state transitions. This chain is Cytochrome b6-f complex iron-sulfur subunit, found in Prochlorococcus marinus (strain MIT 9303).